Reading from the N-terminus, the 290-residue chain is F-box protein PP2-A13 (290 aa).

Residues 21-67 form the F-box domain; it reads RKLRLVDLPENCVALIMTRLDPPEICRLARLNRMFRRASSADFIWES.

In terms of assembly, part of a SCF (ASK-cullin-F-box) protein ligase complex. Interacts with SKP1A/ASK1, SKP1B/ASK2, ASK5, ASK11 and ASK13.

The protein localises to the nucleus. The protein operates within protein modification; protein ubiquitination. Functionally, component of SCF(ASK-cullin-F-box) E3 ubiquitin ligase complexes, which may mediate the ubiquitination and subsequent proteasomal degradation of target proteins. This is F-box protein PP2-A13 (PP2A13) from Arabidopsis thaliana (Mouse-ear cress).